The chain runs to 155 residues: uncharacterized protein (155 aa).

Disordered stretches follow at residues Met1 to Phe22 and Asn110 to Ala155. N-acetylserine is present on Ser2. Ser136, Ser144, and Ser146 each carry phosphoserine. A compositionally biased stretch (acidic residues) spans Ser136–Ala155.

This is an uncharacterized protein from Mus musculus (Mouse).